The chain runs to 119 residues: Ubiquinone biosynthesis accessory factor UbiK (119 aa).

Residues Leu-79 to Arg-99 are a coiled coil. The span at Leu-96–Lys-106 shows a compositional bias: basic and acidic residues. Positions Leu-96 to Glu-119 are disordered. The segment covering Pro-109 to Glu-119 has biased composition (pro residues).

The protein belongs to the UbiK family. In terms of assembly, homotrimer.

The protein localises to the cytoplasm. The protein operates within cofactor biosynthesis; ubiquinone biosynthesis. Required for efficient ubiquinone (coenzyme Q) biosynthesis under aerobic conditions. UbiK is probably an accessory factor of Ubi enzymes and facilitates ubiquinone biosynthesis by acting as an assembly factor, a targeting factor, or both. Dispensable for ubiquinone biosynthesis under anaerobiosis. Required for proliferation in macrophages and virulence in mice. Significantly contributes to colonization and invasion as well as host inflammation and innate immunity after infection. In vitro, has membrane fusogenic activity at acidic pH. This Salmonella typhimurium (strain LT2 / SGSC1412 / ATCC 700720) protein is Ubiquinone biosynthesis accessory factor UbiK.